Here is a 293-residue protein sequence, read N- to C-terminus: Lysosomal amino acid transporter 1 homolog (293 aa).

Residues 1 to 37 (MVWRTLVASNFSTCPNGSIQWIWDVFGECAQDGWDEA) are Lumenal-facing. The N-linked (GlcNAc...) asparagine glycan is linked to Asn10. The PQ-loop 1 domain occupies 34–100 (WDEASVALGL…LADQLPLQTY (67 aa)). Residues 38–58 (SVALGLVSIFCFAASTFPQYI) form a helical membrane-spanning segment. At 59-71 (KACKTGNMDQALS) the chain is on the cytoplasmic side. Residues 72–92 (LWFLLGWIGGDSCNLIGSFLA) traverse the membrane as a helical segment. Topologically, residues 93 to 96 (DQLP) are lumenal. Residues 97–117 (LQTYTAVYYVLADLLMLTLYF) traverse the membrane as a helical segment. Topologically, residues 118 to 126 (HYKFKKQPS) are cytoplasmic. Residues 127-147 (LLSAPINSVLLFILGTVCITP) form a helical membrane-spanning segment. Residues 148–182 (LLSSTDPVAVPREGFRGRTLLSVEPGNKPFTKKEV) are Lumenal-facing. The helical transmembrane segment at 183–203 (VGFVIGSASSVLYLLSRLPQI) threads the bilayer. One can recognise a PQ-loop 2 domain in the interval 191–243 (SSVLYLLSRLPQIRTNFVRQSTQGISYSLFALVMLGNTLYGLSVLLKNPEVGQ). At 204–214 (RTNFVRQSTQG) the chain is on the cytoplasmic side. Residues 215–235 (ISYSLFALVMLGNTLYGLSVL) traverse the membrane as a helical segment. Residues 236–254 (LKNPEVGQSEGSYLLHHLP) lie on the Lumenal side of the membrane. A helical transmembrane segment spans residues 255 to 275 (WLVGSLGVLLLDTIISIQFLV). The Cytoplasmic segment spans residues 276–293 (YRSHDADAASEREPLLPS). The Di-leucine motif signature appears at 290–291 (LL).

Belongs to the laat-1 family.

The protein resides in the lysosome membrane. Functionally, amino acid transporter that specifically mediates the pH-dependent export of the cationic amino acids arginine, histidine and lysine from lysosomes. The polypeptide is Lysosomal amino acid transporter 1 homolog (Slc66a1) (Rattus norvegicus (Rat)).